We begin with the raw amino-acid sequence, 395 residues long: Putative pyridoxal phosphate-dependent acyltransferase (395 aa).

110 to 111 provides a ligand contact to pyridoxal 5'-phosphate; sequence GF. Histidine 135 is a substrate binding site. Pyridoxal 5'-phosphate is bound by residues serine 185, 210 to 213, and 240 to 243; these read DDAH and TLSK. The residue at position 243 (lysine 243) is an N6-(pyridoxal phosphate)lysine. Threonine 357 contributes to the substrate binding site.

The protein belongs to the class-II pyridoxal-phosphate-dependent aminotransferase family. Homodimer. Requires pyridoxal 5'-phosphate as cofactor.

The protein is Putative pyridoxal phosphate-dependent acyltransferase of Staphylococcus aureus (strain Mu50 / ATCC 700699).